The chain runs to 346 residues: MSGVSSVMLGLRPATRIFFRSNISVSPSRTFVSYIGRSQSTSILKNAPNLEDNVTNLQKIIPKRFFSQTSILKSRWKPIFNEETTNRYVRLNRFQQYQQQRSGGNPLGSMTILGLSLMAGIYFGSPYLFEHVPPFTYFKTHPKNLVYALLGINVAVFGLWQLPKCWRFLQKYMLLQKDYVTSKISIIGSAFSHQEFWHLGMNMLALWSFGTSLATMLGASNFFSLYMNSAIAGSLFSLWYPKLARLAIVGPSLGASGALFGVLGCFSYLFPHAKILLFVFPVPGGAWVAFLASVAWNAAGCALRWGSFDYAAHLGGSMMGVLYGWYISKAVEKQRQRRLQAAGRWF.

Residues 1–73 (MSGVSSVMLG…RFFSQTSILK (73 aa)) constitute a mitochondrion transit peptide. 6 helical membrane passes run 109–129 (SMTI…PYLF), 145–165 (LVYA…LPKC), 203–223 (MLAL…SNFF), 246–266 (LAIV…LGCF), 275–295 (ILLF…ASVA), and 308–328 (FDYA…WYIS). The active-site Nucleophile is serine 256. Residue histidine 313 is part of the active site.

This sequence belongs to the peptidase S54 family.

The protein resides in the mitochondrion inner membrane. It catalyses the reaction Cleaves type-1 transmembrane domains using a catalytic dyad composed of serine and histidine that are contributed by different transmembrane domains.. Its function is as follows. Mitochondrial rhomboid serine protease processing the mitochondrial membrane fusion regulator MGM1, and the cytochrome c peroxidase (CCP1). Required for TIM11 stability, ATP synthase complex assembly, mitochondrial morphology, cytochrome c (CYC1) storage and mitochondrial genome maintenance. The polypeptide is Rhomboid protein 1, mitochondrial (PCP1) (Saccharomyces cerevisiae (strain ATCC 204508 / S288c) (Baker's yeast)).